The sequence spans 186 residues: Large ribosomal subunit protein uL22 (186 aa).

The segment at 161-186 (VDDEPAKKKLSKKKLQRQKEKMLRSE) is disordered. A compositionally biased stretch (basic and acidic residues) spans 177-186 (RQKEKMLRSE).

It belongs to the universal ribosomal protein uL22 family.

The sequence is that of Large ribosomal subunit protein uL22 (RpL17) from Drosophila pseudoobscura pseudoobscura (Fruit fly).